We begin with the raw amino-acid sequence, 456 residues long: Hydroxyproline dehydrogenase (456 aa).

N6-acetyllysine occurs at positions 310 and 320.

The protein belongs to the proline oxidase family. FAD serves as cofactor.

The catalysed reaction is trans-4-hydroxy-L-proline + a quinone = (3R,5S)-1-pyrroline-3-hydroxy-5-carboxylate + a quinol + H(+). The enzyme catalyses L-proline + a quinone = (S)-1-pyrroline-5-carboxylate + a quinol + H(+). Dehydrogenase that converts trans-4-L-hydroxyproline to delta-1-pyrroline-3-hydroxy-5-carboxylate (Hyp) using ubiquinone-10 as the terminal electron acceptor. Can also use proline as a substrate but with a very much lower efficiency. Does not react with other diastereomers of Hyp: trans-4-D-hydroxyproline and cis-4-L-hydroxyproline. Ubiquininone analogs such as menadione, duroquinone and ubiquinone-1 react more efficiently than oxygen as the terminal electron acceptor during catalysis. The protein is Hydroxyproline dehydrogenase of Rattus norvegicus (Rat).